Reading from the N-terminus, the 412-residue chain is Histone-lysine N-methyltransferase SUV39H1 (412 aa).

An interaction with SIRT1 region spans residues 1-89 (MAENLKGCSV…LKCVRILKQF (89 aa)). One can recognise a Chromo domain in the interval 43–101 (FEVEYLCDYKKIREQEYYLVKWRGYPDSESTWEPRQNLKCVRILKQFHKDLERELLRRH). One can recognise a Pre-SET domain in the interval 179–240 (VGCECQDCLW…DCPNRVVQKG (62 aa)). The Zn(2+) site is built by cysteine 181, cysteine 183, cysteine 186, cysteine 194, cysteine 195, cysteine 222, cysteine 226, cysteine 228, and cysteine 232. Residues 243–366 (YDLCIFRTDD…AGEELTFDYN (124 aa)) enclose the SET domain. S-adenosyl-L-methionine is bound at residue 254–256 (RGW). Residues 255–377 (GWGVRTLEKI…QVDPVDMEST (123 aa)) are mediates interaction with MECOM. An N6-acetyllysine modification is found at lysine 266. S-adenosyl-L-methionine-binding positions include tyrosine 297 and 323-324 (NH). Cysteine 326 contributes to the Zn(2+) binding site. At serine 391 the chain carries Phosphoserine. Positions 396 to 412 (VRIECKCGTESCRKYLF) constitute a Post-SET domain. Zn(2+) contacts are provided by cysteine 400, cysteine 402, and cysteine 407.

This sequence belongs to the class V-like SAM-binding methyltransferase superfamily. Histone-lysine methyltransferase family. Suvar3-9 subfamily. Interacts with H3 and H4 histones. Interacts with GFI1B, DNMT3B, CBX1, CBX4, CCAR2, MBD1, RUNX1, RUNX3, MYOD1, SMAD5 and RB1. Interacts with SBF1 through the SET domain. Interacts with HDAC1 and HDAC2 through the N-terminus and associates with the core histone deacetylase complex composed of HDAC1, HDAC2, RBBP4 and RBBP7. Component of the eNoSC complex, composed of SIRT1, SUV39H1 and RRP8. Interacts (via SET domain) with MECOM; enhances MECOM transcriptional repression activity. Interacts with LMNA; the interaction increases stability of SUV39H1. The large PER complex involved in the histone methylation is composed of at least PER2, CBX3, TRIM28, SUV39H1 and/or SUV39H2; CBX3 mediates the formation of the complex. In terms of assembly, (Microbial infection) Interacts with HTLV-1 Tax protein, leading to abrogate Tax transactivation of HTLV-1 LTR. Phosphorylated on serine residues, and to a lesser degree, on threonine residues. The phosphorylated form is stabilized by SBF1 and is less active in its transcriptional repressor function. Post-translationally, ubiquitinated by the DCX(DCAF13) E3 ubiquitin ligase complex, leading to its degradation. In terms of processing, acetylated at Lys-266, leading to inhibition of enzyme activity. SIRT1-mediated deacetylation relieves this inhibition. (Microbial infection) A higher molecular weight form is also seen in M.bovis infected cells.

Its subcellular location is the nucleus. The protein localises to the nucleus lamina. It localises to the nucleoplasm. The protein resides in the chromosome. It is found in the centromere. Its subcellular location is the cytoplasmic vesicle. The protein localises to the phagosome lumen. It localises to the cell membrane. The enzyme catalyses L-lysyl(9)-[histone H3] + 3 S-adenosyl-L-methionine = N(6),N(6),N(6)-trimethyl-L-lysyl(9)-[histone H3] + 3 S-adenosyl-L-homocysteine + 3 H(+). Its activity is regulated as follows. Inhibited by S-adenosyl-L-homocysteine. Negatively regulated by CCAR2. Histone methyltransferase that specifically trimethylates 'Lys-9' of histone H3 using monomethylated H3 'Lys-9' as substrate. Also weakly methylates histone H1 (in vitro). H3 'Lys-9' trimethylation represents a specific tag for epigenetic transcriptional repression by recruiting HP1 (CBX1, CBX3 and/or CBX5) proteins to methylated histones. Mainly functions in heterochromatin regions, thereby playing a central role in the establishment of constitutive heterochromatin at pericentric and telomere regions. H3 'Lys-9' trimethylation is also required to direct DNA methylation at pericentric repeats. SUV39H1 is targeted to histone H3 via its interaction with RB1 and is involved in many processes, such as repression of MYOD1-stimulated differentiation, regulation of the control switch for exiting the cell cycle and entering differentiation, repression by the PML-RARA fusion protein, BMP-induced repression, repression of switch recombination to IgA and regulation of telomere length. Component of the eNoSC (energy-dependent nucleolar silencing) complex, a complex that mediates silencing of rDNA in response to intracellular energy status and acts by recruiting histone-modifying enzymes. The eNoSC complex is able to sense the energy status of cell: upon glucose starvation, elevation of NAD(+)/NADP(+) ratio activates SIRT1, leading to histone H3 deacetylation followed by dimethylation of H3 at 'Lys-9' (H3K9me2) by SUV39H1 and the formation of silent chromatin in the rDNA locus. Recruited by the large PER complex to the E-box elements of the circadian target genes such as PER2 itself or PER1, contributes to the conversion of local chromatin to a heterochromatin-like repressive state through H3 'Lys-9' trimethylation. In terms of biological role, (Microbial infection) Plays a role in defense against mycobacterial infections. Methylates M.tuberculosis HupB on 'Lys-140', probably methylates HupB of M.bovis also. Methylation has an inhibitory effect on mycobacterial growth in the host. Macrophages expressing about 60% SUV39H1 are slightly more susceptible to M.bovis or M.tuberculosis infection. Chaetocin (an inhibitor of this enzyme) increases macrophage survival of M.tuberculosis. This protein inhibits biofilm formation by M.tuberculosis via 'Lys-140' trimethylation. The protein is Histone-lysine N-methyltransferase SUV39H1 (SUV39H1) of Homo sapiens (Human).